The chain runs to 460 residues: Bifunctional protein GlmU (460 aa).

The segment at 1-235 is pyrophosphorylase; the sequence is MALSAAIVLA…PLTVEGVNDR (235 aa). Residues 9 to 12, K23, Q76, and 81 to 82 contribute to the UDP-N-acetyl-alpha-D-glucosamine site; these read LAAG and GT. Residue D109 participates in Mg(2+) binding. UDP-N-acetyl-alpha-D-glucosamine contacts are provided by G146, E161, N176, and N233. A Mg(2+)-binding site is contributed by N233. Residues 236–256 form a linker region; that stretch reads VQLAALSKTYNRRVCERWMRD. Residues 257–460 form an N-acetyltransferase region; sequence GVTILDPETT…VEGWKPAWER (204 aa). UDP-N-acetyl-alpha-D-glucosamine-binding residues include R338 and K356. Catalysis depends on H368, which acts as the Proton acceptor. UDP-N-acetyl-alpha-D-glucosamine-binding residues include Y371 and N382. Residues 391-392 and A428 contribute to the acetyl-CoA site; that span reads NY.

It in the N-terminal section; belongs to the N-acetylglucosamine-1-phosphate uridyltransferase family. In the C-terminal section; belongs to the transferase hexapeptide repeat family. As to quaternary structure, homotrimer. The cofactor is Mg(2+).

It is found in the cytoplasm. The enzyme catalyses alpha-D-glucosamine 1-phosphate + acetyl-CoA = N-acetyl-alpha-D-glucosamine 1-phosphate + CoA + H(+). It carries out the reaction N-acetyl-alpha-D-glucosamine 1-phosphate + UTP + H(+) = UDP-N-acetyl-alpha-D-glucosamine + diphosphate. It participates in nucleotide-sugar biosynthesis; UDP-N-acetyl-alpha-D-glucosamine biosynthesis; N-acetyl-alpha-D-glucosamine 1-phosphate from alpha-D-glucosamine 6-phosphate (route II): step 2/2. It functions in the pathway nucleotide-sugar biosynthesis; UDP-N-acetyl-alpha-D-glucosamine biosynthesis; UDP-N-acetyl-alpha-D-glucosamine from N-acetyl-alpha-D-glucosamine 1-phosphate: step 1/1. The protein operates within bacterial outer membrane biogenesis; LPS lipid A biosynthesis. Catalyzes the last two sequential reactions in the de novo biosynthetic pathway for UDP-N-acetylglucosamine (UDP-GlcNAc). The C-terminal domain catalyzes the transfer of acetyl group from acetyl coenzyme A to glucosamine-1-phosphate (GlcN-1-P) to produce N-acetylglucosamine-1-phosphate (GlcNAc-1-P), which is converted into UDP-GlcNAc by the transfer of uridine 5-monophosphate (from uridine 5-triphosphate), a reaction catalyzed by the N-terminal domain. The polypeptide is Bifunctional protein GlmU (Bifidobacterium longum (strain DJO10A)).